The sequence spans 693 residues: Glycine--tRNA ligase beta subunit (693 aa).

This sequence belongs to the class-II aminoacyl-tRNA synthetase family. In terms of assembly, tetramer of two alpha and two beta subunits.

The protein localises to the cytoplasm. The enzyme catalyses tRNA(Gly) + glycine + ATP = glycyl-tRNA(Gly) + AMP + diphosphate. The sequence is that of Glycine--tRNA ligase beta subunit from Vibrio vulnificus (strain CMCP6).